The sequence spans 322 residues: Serine/threonine-protein phosphatase PP1-2 (322 aa).

Positions 60, 62, 88, and 120 each coordinate Mn(2+). Catalysis depends on His121, which acts as the Proton donor. His169 and His244 together coordinate Mn(2+). A disordered region spans residues 298 to 322 (RQRVSQSSIKESKSATNSLKKSKNN). Over residues 301–316 (VSQSSIKESKSATNSL) the composition is skewed to polar residues.

This sequence belongs to the PPP phosphatase family. PP-1 subfamily. Requires Mn(2+) as cofactor.

The enzyme catalyses O-phospho-L-seryl-[protein] + H2O = L-seryl-[protein] + phosphate. It catalyses the reaction O-phospho-L-threonyl-[protein] + H2O = L-threonyl-[protein] + phosphate. Functionally, essential role in cell cycle control. PP1 is perhaps required for exit from mitosis. In Schizosaccharomyces pombe (strain 972 / ATCC 24843) (Fission yeast), this protein is Serine/threonine-protein phosphatase PP1-2 (sds21).